The primary structure comprises 495 residues: Leucine aminopeptidase 2 (495 aa).

Positions 1–21 (MKSQLLSLAVAVSTISQGVVG) are cleaved as a signal peptide. The 95-residue stretch at 124 to 218 (PPANKIMAEL…EDGKNLASLV (95 aa)) folds into the PA domain. Residues asparagine 142 and asparagine 235 are each glycosylated (N-linked (GlcNAc...) asparagine). The Zn(2+) site is built by histidine 259 and aspartate 271. An N-linked (GlcNAc...) asparagine glycan is attached at asparagine 272. Catalysis depends on glutamate 303, which acts as the Proton acceptor. Residues glutamate 304 and aspartate 332 each coordinate Zn(2+). Asparagine 352 is a glycosylation site (N-linked (GlcNAc...) asparagine). Residue histidine 430 participates in Zn(2+) binding.

It belongs to the peptidase M28 family. M28A subfamily. As to quaternary structure, monomer. It depends on Zn(2+) as a cofactor.

It localises to the secreted. Its function is as follows. Extracellular aminopeptidase that releases a wide variety of amino acids from natural peptides and contributes to pathogenicity. This chain is Leucine aminopeptidase 2 (LAP2), found in Trichophyton tonsurans (Scalp ringworm fungus).